The following is a 90-amino-acid chain: Sakacin-A immunity factor (90 aa).

In terms of biological role, imparts immunity to sakacin-A to naturally sensitive host strains. The protein is Sakacin-A immunity factor (saiA) of Latilactobacillus sakei (Lactobacillus sakei).